Here is a 294-residue protein sequence, read N- to C-terminus: Nucleotide-binding protein CLD_1131 (294 aa).

8–15 contacts ATP; that stretch reads GLSGAGKT. A GTP-binding site is contributed by 59 to 62; sequence DIRG.

This sequence belongs to the RapZ-like family.

In terms of biological role, displays ATPase and GTPase activities. The sequence is that of Nucleotide-binding protein CLD_1131 from Clostridium botulinum (strain Okra / Type B1).